We begin with the raw amino-acid sequence, 1006 residues long: E3 ubiquitin-protein ligase MIB1 (1006 aa).

One can recognise an MIB/HERC2 1 domain in the interval N6–A74. The segment at H80–S132 adopts a ZZ-type zinc-finger fold. The Zn(2+) site is built by C85, C88, C100, C103, C109, C112, H118, and H122. An MIB/HERC2 2 domain is found at S143–A221. S408 carries the post-translational modification Phosphoserine. 9 ANK repeats span residues D430–G460, A463–A492, D496–A525, R529–L558, E562–I591, N595–E627, D631–I661, N665–I694, and D698–A729. 2 consecutive RING-type zinc fingers follow at residues C819–K854 and C866–R901. Residues Q935–M962 are a coiled coil. Residues C963–R996 form an RING-type 3 zinc finger.

In terms of assembly, interacts with CEP131 and PCM1. In terms of processing, ubiquitinated; possibly via autoubiquitination. Ubiquitinated; this modification is inhibited in response to cellular stress, such as ultraviolet light (UV) radiation or heat shock. In terms of tissue distribution, widely expressed at low level. Expressed at higher level in spinal cord, ovary, whole brain, and all specific brain regions examined.

Its subcellular location is the cytoplasm. The protein localises to the cytoskeleton. It localises to the microtubule organizing center. The protein resides in the centrosome. It is found in the centriolar satellite. Its subcellular location is the cell membrane. It catalyses the reaction S-ubiquitinyl-[E2 ubiquitin-conjugating enzyme]-L-cysteine + [acceptor protein]-L-lysine = [E2 ubiquitin-conjugating enzyme]-L-cysteine + N(6)-ubiquitinyl-[acceptor protein]-L-lysine.. It participates in protein modification; protein ubiquitination. E3 ubiquitin-protein ligase that mediates ubiquitination of Delta receptors, which act as ligands of Notch proteins. Positively regulates the Delta-mediated Notch signaling by ubiquitinating the intracellular domain of Delta, leading to endocytosis of Delta receptors. Probably mediates ubiquitination and subsequent proteasomal degradation of DAPK1, thereby antagonizing anti-apoptotic effects of DAPK1 to promote TNF-induced apoptosis. Involved in ubiquitination of centriolar satellite CEP131, CEP290 and PCM1 proteins and hence inhibits primary cilium formation in proliferating cells. Mediates 'Lys-63'-linked polyubiquitination of TBK1, which probably participates in kinase activation. Its function is as follows. (Microbial infection) During adenovirus infection, mediates ubiquitination of Core-capsid bridging protein. This allows viral genome delivery into nucleus for infection. The protein is E3 ubiquitin-protein ligase MIB1 (MIB1) of Homo sapiens (Human).